The following is a 440-amino-acid chain: Cyclic dipeptide prenyltransferase (440 aa).

Positions 1–33 (MDGEMTASPPDISACDTSAVDEQTGQSGQSQAP) are disordered. Residues 20–32 (VDEQTGQSGQSQA) are compositionally biased toward polar residues. Substrate is bound by residues T108 and E116. Residues R129, K219, and Y221 each contribute to the dimethylallyl diphosphate site. A substrate-binding site is contributed by F223. Dimethylallyl diphosphate-binding residues include K286, Y288, Y366, Y431, and Y435.

It belongs to the tryptophan dimethylallyltransferase family.

It catalyses the reaction harmol + dimethylallyl diphosphate = 6-(3-dimethylallyl)harmol + diphosphate. The enzyme catalyses an N-terminal L-tryptophanyl-L-alpha-aminoacyl-[peptide] + H2O = an N-terminal L-alpha-aminoacyl-[peptide] + L-tryptophan. It carries out the reaction (R)-benzodiazepinedione + dimethylallyl diphosphate = (2S,3R,11R)-aszonalenin + diphosphate. The catalysed reaction is (S)-benzodiazepinedione + dimethylallyl diphosphate = (2S,3R,11S)-aszonalenin + diphosphate. Prenyltransferase that catalyzes reverse prenylation at position N-1 of tryptophan-containing cyclic dipeptides. Accepts only dimethylallyl diphosphate (DMAPP) as the prenyl donor but shows broad substrate specificities toward its aromatic substrates. Also shows tryptophan aminopeptidase activity with preference for linear peptides containing a tryptophanyl moiety at the N-terminus. The sequence is that of Cyclic dipeptide prenyltransferase from Aspergillus fumigatus (Neosartorya fumigata).